A 152-amino-acid chain; its full sequence is Nucleoside diphosphate kinase (152 aa).

Residues Lys-11, Phe-59, Arg-87, Thr-93, Arg-104, and Asn-114 each coordinate ATP. Catalysis depends on His-117, which acts as the Pros-phosphohistidine intermediate.

Belongs to the NDK family. In terms of assembly, homotetramer. Mg(2+) is required as a cofactor.

Its subcellular location is the cytoplasm. The enzyme catalyses a 2'-deoxyribonucleoside 5'-diphosphate + ATP = a 2'-deoxyribonucleoside 5'-triphosphate + ADP. It carries out the reaction a ribonucleoside 5'-diphosphate + ATP = a ribonucleoside 5'-triphosphate + ADP. Functionally, major role in the synthesis of nucleoside triphosphates other than ATP. The ATP gamma phosphate is transferred to the NDP beta phosphate via a ping-pong mechanism, using a phosphorylated active-site intermediate. In Prochlorococcus marinus (strain MIT 9312), this protein is Nucleoside diphosphate kinase.